A 145-amino-acid chain; its full sequence is Large ribosomal subunit protein uL15 (145 aa).

The interval 1–58 is disordered; it reads MKLHELSPSEGSRKKRKRVGRGPGSGMGGTSTRGNKGHNQRSGGGTRPGFEGGQMPLH. Composition is skewed to gly residues over residues 21 to 31 and 42 to 52; these read RGPGSGMGGTS and SGGGTRPGFEG.

Belongs to the universal ribosomal protein uL15 family. Part of the 50S ribosomal subunit.

Binds to the 23S rRNA. This is Large ribosomal subunit protein uL15 from Desulforapulum autotrophicum (strain ATCC 43914 / DSM 3382 / VKM B-1955 / HRM2) (Desulfobacterium autotrophicum).